A 182-amino-acid chain; its full sequence is ATP-dependent protease subunit HslV (182 aa).

Thr10 is a catalytic residue. Na(+) is bound by residues Ala166, Cys169, and Ser172.

Belongs to the peptidase T1B family. HslV subfamily. In terms of assembly, a double ring-shaped homohexamer of HslV is capped on each side by a ring-shaped HslU homohexamer. The assembly of the HslU/HslV complex is dependent on binding of ATP.

It localises to the cytoplasm. The enzyme catalyses ATP-dependent cleavage of peptide bonds with broad specificity.. With respect to regulation, allosterically activated by HslU binding. Functionally, protease subunit of a proteasome-like degradation complex believed to be a general protein degrading machinery. This is ATP-dependent protease subunit HslV from Rickettsia felis (strain ATCC VR-1525 / URRWXCal2) (Rickettsia azadi).